The primary structure comprises 411 residues: LL-diaminopimelate aminotransferase (411 aa).

Residues Tyr-15 and Gly-42 each contribute to the substrate site. Pyridoxal 5'-phosphate contacts are provided by residues Tyr-72, 108–109, Tyr-132, Asn-187, Tyr-218, and 246–248; these read SK and SFS. Substrate is bound by residues Lys-109, Tyr-132, and Asn-187. At Lys-249 the chain carries N6-(pyridoxal phosphate)lysine. Positions 257 and 292 each coordinate pyridoxal 5'-phosphate. Substrate contacts are provided by Asn-292 and Arg-388.

It belongs to the class-I pyridoxal-phosphate-dependent aminotransferase family. LL-diaminopimelate aminotransferase subfamily. In terms of assembly, homodimer. The cofactor is pyridoxal 5'-phosphate.

The enzyme catalyses (2S,6S)-2,6-diaminopimelate + 2-oxoglutarate = (S)-2,3,4,5-tetrahydrodipicolinate + L-glutamate + H2O + H(+). It functions in the pathway amino-acid biosynthesis; L-lysine biosynthesis via DAP pathway; LL-2,6-diaminopimelate from (S)-tetrahydrodipicolinate (aminotransferase route): step 1/1. Involved in the synthesis of meso-diaminopimelate (m-DAP or DL-DAP), required for both lysine and peptidoglycan biosynthesis. Catalyzes the direct conversion of tetrahydrodipicolinate to LL-diaminopimelate. In Cyanothece sp. (strain PCC 7425 / ATCC 29141), this protein is LL-diaminopimelate aminotransferase.